The primary structure comprises 84 residues: Small ribosomal subunit protein uS17 (84 aa).

It belongs to the universal ribosomal protein uS17 family. In terms of assembly, part of the 30S ribosomal subunit.

Its function is as follows. One of the primary rRNA binding proteins, it binds specifically to the 5'-end of 16S ribosomal RNA. This Clostridium botulinum (strain 657 / Type Ba4) protein is Small ribosomal subunit protein uS17.